We begin with the raw amino-acid sequence, 343 residues long: tRNA N6-adenosine threonylcarbamoyltransferase (343 aa).

Residues H120 and H124 each coordinate Fe cation. Residues 142 to 146, D175, G188, D192, and N281 each bind substrate; that span reads VVSGG. D310 contacts Fe cation.

Belongs to the KAE1 / TsaD family. Fe(2+) serves as cofactor.

It localises to the cytoplasm. It catalyses the reaction L-threonylcarbamoyladenylate + adenosine(37) in tRNA = N(6)-L-threonylcarbamoyladenosine(37) in tRNA + AMP + H(+). Its function is as follows. Required for the formation of a threonylcarbamoyl group on adenosine at position 37 (t(6)A37) in tRNAs that read codons beginning with adenine. Is involved in the transfer of the threonylcarbamoyl moiety of threonylcarbamoyl-AMP (TC-AMP) to the N6 group of A37, together with TsaE and TsaB. TsaD likely plays a direct catalytic role in this reaction. The polypeptide is tRNA N6-adenosine threonylcarbamoyltransferase (Bacillus thuringiensis subsp. konkukian (strain 97-27)).